The following is a 217-amino-acid chain: Thiopurine S-methyltransferase (217 aa).

Residues Trp-11, Leu-46, Glu-67, and Arg-122 each contribute to the S-adenosyl-L-methionine site.

Belongs to the class I-like SAM-binding methyltransferase superfamily. TPMT family.

The protein resides in the cytoplasm. The enzyme catalyses S-adenosyl-L-methionine + a thiopurine = S-adenosyl-L-homocysteine + a thiopurine S-methylether.. This is Thiopurine S-methyltransferase from Vibrio atlanticus (strain LGP32) (Vibrio splendidus (strain Mel32)).